The sequence spans 69 residues: Ubiquitin-ribosomal protein eL40 fusion protein (69 aa).

A Ubiquitin-like domain is found at 1 to 17; the sequence is NIQKESTLHLVLRLRGG. K4 is covalently cross-linked (Glycyl lysine isopeptide (Lys-Gly) (interchain with G-Cter in ubiquitin)). G17 participates in a covalent cross-link: Glycyl lysine isopeptide (Gly-Lys) (interchain with K-? in acceptor proteins). An N6,N6,N6-trimethyllysine modification is found at K39.

It in the N-terminal section; belongs to the ubiquitin family. The protein in the C-terminal section; belongs to the eukaryotic ribosomal protein eL40 family. Part of the 60S ribosomal subunit. Trimethylation of Lys-39 ('Lys-22' of the mature chain) by SMYD5 promotes translation elongation and protein synthesis.

The protein localises to the cytoplasm. It localises to the nucleus. Functionally, exists either covalently attached to another protein, or free (unanchored). When covalently bound, it is conjugated to target proteins via an isopeptide bond either as a monomer (monoubiquitin), a polymer linked via different Lys residues of the ubiquitin (polyubiquitin chains) or a linear polymer linked via the initiator Met of the ubiquitin (linear polyubiquitin chains). Polyubiquitin chains, when attached to a target protein, have different functions depending on the Lys residue of the ubiquitin that is linked: Lys-6-linked may be involved in DNA repair; Lys-11-linked is involved in ERAD (endoplasmic reticulum-associated degradation) and in cell-cycle regulation; Lys-29-linked is involved in proteotoxic stress response and cell cycle; Lys-33-linked is involved in kinase modification; Lys-48-linked is involved in protein degradation via the proteasome; Lys-63-linked is involved in endocytosis, DNA-damage responses as well as in signaling processes leading to activation of the transcription factor NF-kappa-B. Linear polymer chains formed via attachment by the initiator Met lead to cell signaling. Ubiquitin is usually conjugated to Lys residues of target proteins, however, in rare cases, conjugation to Cys or Ser residues has been observed. When polyubiquitin is free (unanchored-polyubiquitin), it also has distinct roles, such as in activation of protein kinases, and in signaling. Component of the 60S subunit of the ribosome. This chain is Ubiquitin-ribosomal protein eL40 fusion protein (UBA52), found in Gallus gallus (Chicken).